The primary structure comprises 207 residues: Outer-membrane lipoprotein LolB (207 aa).

The first 21 residues, 1 to 21 (MPLPDFRLIRLLPLAALVLTA), serve as a signal peptide directing secretion. Cys-22 is lipidated: N-palmitoyl cysteine. Cys-22 carries the S-diacylglycerol cysteine lipid modification.

This sequence belongs to the LolB family. Monomer.

It localises to the cell outer membrane. Plays a critical role in the incorporation of lipoproteins in the outer membrane after they are released by the LolA protein. In Shigella dysenteriae serotype 1 (strain Sd197), this protein is Outer-membrane lipoprotein LolB.